The primary structure comprises 110 residues: Large ribosomal subunit protein uL22 (110 aa).

This sequence belongs to the universal ribosomal protein uL22 family. In terms of assembly, part of the 50S ribosomal subunit.

In terms of biological role, this protein binds specifically to 23S rRNA; its binding is stimulated by other ribosomal proteins, e.g. L4, L17, and L20. It is important during the early stages of 50S assembly. It makes multiple contacts with different domains of the 23S rRNA in the assembled 50S subunit and ribosome. Functionally, the globular domain of the protein is located near the polypeptide exit tunnel on the outside of the subunit, while an extended beta-hairpin is found that lines the wall of the exit tunnel in the center of the 70S ribosome. In Pseudoalteromonas atlantica (strain T6c / ATCC BAA-1087), this protein is Large ribosomal subunit protein uL22.